Here is a 165-residue protein sequence, read N- to C-terminus: Chorismate pyruvate-lyase (165 aa).

Residues M35, R77, L115, and E156 each contribute to the substrate site.

The protein belongs to the UbiC family. In terms of assembly, monomer.

The protein localises to the cytoplasm. It catalyses the reaction chorismate = 4-hydroxybenzoate + pyruvate. It functions in the pathway cofactor biosynthesis; ubiquinone biosynthesis. Its function is as follows. Removes the pyruvyl group from chorismate, with concomitant aromatization of the ring, to provide 4-hydroxybenzoate (4HB) for the ubiquinone pathway. The polypeptide is Chorismate pyruvate-lyase (Escherichia coli O157:H7).